The primary structure comprises 133 residues: Membrane protein FAM174B (133 aa).

The first 19 residues, 1 to 19 (MWLYTFAVALIVIAQEING), serve as a signal peptide directing secretion. Topologically, residues 20-67 (EPHTRPSSATPLNATLPPQEEGSAQNTTDAAVGSRLSTILRDLPTIKN) are extracellular. The tract at residues 22 to 47 (HTRPSSATPLNATLPPQEEGSAQNTT) is disordered. N-linked (GlcNAc...) asparagine glycosylation is found at asparagine 32, asparagine 45, and asparagine 67. The chain crosses the membrane as a helical span at residues 68 to 88 (ISIFICVLTTLLITCLVIKIC). Residues 89–133 (RSARKIRKTRKYDIITTPAERVEMAPLNEENDEEDDSTLFDVKYR) lie on the Cytoplasmic side of the membrane. Residues 113–133 (APLNEENDEEDDSTLFDVKYR) form a disordered region. Positions 117–126 (EENDEEDDST) are enriched in acidic residues.

The protein belongs to the FAM174 family.

It localises to the cell membrane. Its subcellular location is the golgi apparatus. Its function is as follows. Essential for Golgi structural integrity. The sequence is that of Membrane protein FAM174B (Fam174b) from Danio rerio (Zebrafish).